The sequence spans 359 residues: 3-dehydroquinate synthase (359 aa).

NAD(+) is bound by residues 72–77 (DGEHYK), 106–110 (GVIGD), 130–131 (TT), Lys143, and Lys152. Residues Glu185, His248, and His265 each contribute to the Zn(2+) site.

The protein belongs to the sugar phosphate cyclases superfamily. Dehydroquinate synthase family. The cofactor is Co(2+). Zn(2+) serves as cofactor. NAD(+) is required as a cofactor.

The protein localises to the cytoplasm. It catalyses the reaction 7-phospho-2-dehydro-3-deoxy-D-arabino-heptonate = 3-dehydroquinate + phosphate. It functions in the pathway metabolic intermediate biosynthesis; chorismate biosynthesis; chorismate from D-erythrose 4-phosphate and phosphoenolpyruvate: step 2/7. In terms of biological role, catalyzes the conversion of 3-deoxy-D-arabino-heptulosonate 7-phosphate (DAHP) to dehydroquinate (DHQ). The sequence is that of 3-dehydroquinate synthase from Thermodesulfovibrio yellowstonii (strain ATCC 51303 / DSM 11347 / YP87).